Reading from the N-terminus, the 367-residue chain is tRNA 2-selenouridine synthase (367 aa).

The 125-residue stretch at 12–136 folds into the Rhodanese domain; it reads FLNDRPLMDA…LRGFLIDTLE (125 aa). Residue cysteine 95 is the S-selanylcysteine intermediate of the active site.

Belongs to the SelU family. Monomer.

It catalyses the reaction 5-methylaminomethyl-2-thiouridine(34) in tRNA + selenophosphate + (2E)-geranyl diphosphate + H2O + H(+) = 5-methylaminomethyl-2-selenouridine(34) in tRNA + (2E)-thiogeraniol + phosphate + diphosphate. The enzyme catalyses 5-methylaminomethyl-2-thiouridine(34) in tRNA + (2E)-geranyl diphosphate = 5-methylaminomethyl-S-(2E)-geranyl-thiouridine(34) in tRNA + diphosphate. It carries out the reaction 5-methylaminomethyl-S-(2E)-geranyl-thiouridine(34) in tRNA + selenophosphate + H(+) = 5-methylaminomethyl-2-(Se-phospho)selenouridine(34) in tRNA + (2E)-thiogeraniol. The catalysed reaction is 5-methylaminomethyl-2-(Se-phospho)selenouridine(34) in tRNA + H2O = 5-methylaminomethyl-2-selenouridine(34) in tRNA + phosphate. Its function is as follows. Involved in the post-transcriptional modification of the uridine at the wobble position (U34) of tRNA(Lys), tRNA(Glu) and tRNA(Gln). Catalyzes the conversion of 2-thiouridine (S2U-RNA) to 2-selenouridine (Se2U-RNA). Acts in a two-step process involving geranylation of 2-thiouridine (S2U) to S-geranyl-2-thiouridine (geS2U) and subsequent selenation of the latter derivative to 2-selenouridine (Se2U) in the tRNA chain. The sequence is that of tRNA 2-selenouridine synthase from Pseudomonas fluorescens (strain Pf0-1).